Here is a 1254-residue protein sequence, read N- to C-terminus: Unconventional myosin-VI (1254 aa).

Residues 2 to 53 (EDGKPVWAPHPTDGFQVGNIVDIGPDSLTIEPLNQKGKTFLALINQVFPAEE) enclose the Myosin N-terminal SH3-like domain. In terms of domain architecture, Myosin motor spans 57–772 (KDVEDNCSLM…KFAEFDQIMK (716 aa)). An ATP-binding site is contributed by 151–158 (GESGAGKT). S267 carries the phosphoserine modification. The segment at 273–317 (YLNRGCTRYFANKETDKQILQNRKSPEYLKAGSLKDPLLDDHGDF) is responsible for slow ATPase activity. T406 is subject to Phosphothreonine. S605 carries the post-translational modification Phosphoserine. An actin-binding region spans residues 666 to 673 (FIRCIKPN). A required for binding calmodulin region spans residues 783–811 (KRVNHWLICSRWKKVQWCSLSVIKLKNKI). Positions 814 to 843 (RAEACIKMQKTIRMWLCKRRHKPRIDGLVK) constitute an IQ domain. The tract at residues 836–917 (PRIDGLVKVG…AVLLSALQKK (82 aa)) is three-helix bundle. Residues 918-985 (KQQEEEAERL…EDDEKRIQAE (68 aa)) are SAH. The interval 935–956 (EKERKRREEDEQRRRKEEEERR) is disordered. S1026 bears the Phosphoserine mark. The tract at residues 1037–1245 (RGPAVQATKA…ESRQARPTYA (209 aa)) is interaction with TAX1BP1 and CALCOCO2/NDP52. The tract at residues 1085-1087 (RRL) is interaction with OPTN. The tract at residues 1096 to 1117 (KNKKRNTETEQRAPKSVTDYAQ) is disordered. The interaction with TOM1 stretch occupies residues 1117 to 1245 (QQNPAVQLPA…ESRQARPTYA (129 aa)).

The protein belongs to the TRAFAC class myosin-kinesin ATPase superfamily. Myosin family. As to quaternary structure, homodimer; dimerization seems to implicate the unfolding of the three-helix bundle region creating an additional calmodulin binding site, and cargo binding. Component of the DISP/DOCK7-induced septin displacement complex, at least composed of DOCK7, LRCH3 and MYO6. Able to function as a monomer under specific conditions in vitro. Forms a complex with CFTR and DAB2 in the apical membrane of epithelial cells. Binding to calmodulin through a unique insert, not found in other myosins, located in the neck region between the motor domain and the IQ domain appears to contribute to the directionality reversal. This interaction occurs only if the C-terminal lobe of calmodulin is occupied by calcium. Interaction with F-actin/ACTN1 occurs only at the apical brush border domain of the proximal tubule cells. Interacts with DAB2. In vitro, the C-terminal globular tail binds a C-terminal region of DAB2. Interacts with CFTR. Interacts with CABP5. Interacts (via residues 1117-1245) with TOM1 (via residues 392-463). Interacts (via residues 1060-1285) with OPTN. Interacts (via residues 1060-1285) with TAX1BP1 and CALCOCO2/NDP52. Interacts with TOM1L2. Interacts with CLIC5; may work together in a complex which also includes RDX and MYO6 to stabilize linkages between the plasma membrane and subjacent actin cytoskeleton at the base of stereocilia. In terms of processing, phosphorylation in the motor domain, induced by EGF, results in translocation of MYO6 from the cell surface to membrane ruffles and affects F-actin dynamics. Phosphorylated in vitro by p21-activated kinase (PAK). Expressed in all tissues examined including kidney cortex, intestinal mucosa, liver, lung, heart, jowl muscle, brain cortex and medulla, and in the epithelial cell line, LLC-PK1 (at protein level). In the kidney, located to the brush border of adult kidney proximal tubule cells.

Its subcellular location is the golgi apparatus. The protein localises to the trans-Golgi network membrane. The protein resides in the nucleus. It localises to the cytoplasm. It is found in the perinuclear region. Its subcellular location is the membrane. The protein localises to the clathrin-coated pit. The protein resides in the cytoplasmic vesicle. It localises to the clathrin-coated vesicle. It is found in the cell projection. Its subcellular location is the filopodium. The protein localises to the ruffle membrane. The protein resides in the microvillus. It localises to the cytosol. In terms of biological role, myosins are actin-based motor molecules with ATPase activity. Unconventional myosins serve in intracellular movements. Myosin 6 is a reverse-direction motor protein that moves towards the minus-end of actin filaments. Has slow rate of actin-activated ADP release due to weak ATP binding. Functions in a variety of intracellular processes such as vesicular membrane trafficking and cell migration. Required for the structural integrity of the Golgi apparatus via the p53-dependent pro-survival pathway. Appears to be involved in a very early step of clathrin-mediated endocytosis in polarized epithelial cells. Together with TOM1, mediates delivery of endocytic cargo to autophagosomes thereby promoting autophagosome maturation and driving fusion with lysosomes. Links TOM1 with autophagy receptors, such as TAX1BP1; CALCOCO2/NDP52 and OPTN. May act as a regulator of F-actin dynamics. As part of the DISP complex, may regulate the association of septins with actin and thereby regulate the actin cytoskeleton. May play a role in transporting DAB2 from the plasma membrane to specific cellular targets. May play a role in the extension and network organization of neurites. Required for structural integrity of inner ear hair cells. Required for the correct localization of CLIC5 and RDX at the stereocilium base. Modulates RNA polymerase II-dependent transcription. The protein is Unconventional myosin-VI (MYO6) of Sus scrofa (Pig).